Consider the following 416-residue polypeptide: Putative L-glutamine:3-amino-2,3-dideoxy-scyllo-inosose aminotransferase (416 aa).

Lysine 199 carries the post-translational modification N6-(pyridoxal phosphate)lysine.

The protein belongs to the DegT/DnrJ/EryC1 family. L-glutamine:2-deoxy-scyllo-inosose/scyllo-inosose aminotransferase subfamily. It depends on pyridoxal 5'-phosphate as a cofactor.

It carries out the reaction 3-amino-2,3-dideoxy-scyllo-inosose + L-glutamine = 2-deoxystreptamine + 2-oxoglutaramate. It participates in metabolic intermediate biosynthesis; 2-deoxystreptamine biosynthesis; 2-deoxystreptamine from D-glucose 6-phosphate: step 4/4. Its pathway is antibiotic biosynthesis; tobramycin biosynthesis. In terms of biological role, catalyzes the transamination of 3-amino-2,3-dideoxy-scyllo-inosose (amino-DOI) into 2-deoxystreptamine (DOS). This is Putative L-glutamine:3-amino-2,3-dideoxy-scyllo-inosose aminotransferase (tobS2) from Streptoalloteichus tenebrarius (strain ATCC 17920 / DSM 40477 / JCM 4838 / CBS 697.72 / NBRC 16177 / NCIMB 11028 / NRRL B-12390 / A12253. 1 / ISP 5477) (Streptomyces tenebrarius).